We begin with the raw amino-acid sequence, 600 residues long: ATP-dependent zinc metalloprotease FtsH 1 (600 aa).

Over 1–8 (MKTHYFKK) the chain is Cytoplasmic. A helical transmembrane segment spans residues 9-29 (IFNLKFLVIFFSILFCILLIL). The Extracellular segment spans residues 30-130 (DLTFERRIKG…PKTDFHLSEL (101 aa)). A helical membrane pass occupies residues 131–151 (ILSLVPIVSSTIFMFYIISNI). Topologically, residues 152–600 (KKSSGKLNSN…IEQLVVNTKK (449 aa)) are cytoplasmic. 215 to 222 (GPPGTGKT) lines the ATP pocket. Position 437 (histidine 437) interacts with Zn(2+). The active site involves glutamate 438. 2 residues coordinate Zn(2+): histidine 441 and aspartate 513.

In the central section; belongs to the AAA ATPase family. This sequence in the C-terminal section; belongs to the peptidase M41 family. In terms of assembly, homohexamer. Requires Zn(2+) as cofactor.

It localises to the cell membrane. Functionally, acts as a processive, ATP-dependent zinc metallopeptidase for both cytoplasmic and membrane proteins. Plays a role in the quality control of integral membrane proteins. The sequence is that of ATP-dependent zinc metalloprotease FtsH 1 from Phytoplasma mali (strain AT).